The following is a 216-amino-acid chain: MSCLPALDKFLQNYHQSYLSTLGELPRYYPQGEPSLCIQGEFDESSDEAVSWLPVKREQLGSFANVEHALELTLWRDINHFYGEYFAAPVLFDSPWGTGELLQVWNEADFDALQQNIIGHLMMKQKLKQPATWFIGLLDEGDKMLTVDNANGSVWVEIPGELPSAQLAPSVAEFIESLSPRIAPPVKHEELPMPALEHPGIFASFKRMWHNLIGKR.

The protein belongs to the Syd family.

It is found in the cell inner membrane. Functionally, interacts with the SecY protein in vivo. May bind preferentially to an uncomplexed state of SecY, thus functioning either as a chelating agent for excess SecY in the cell or as a regulatory factor that negatively controls the translocase function. In Shewanella sp. (strain MR-4), this protein is Protein Syd.